An 80-amino-acid chain; its full sequence is Exodeoxyribonuclease 7 small subunit (80 aa).

The protein belongs to the XseB family. Heterooligomer composed of large and small subunits.

It localises to the cytoplasm. It catalyses the reaction Exonucleolytic cleavage in either 5'- to 3'- or 3'- to 5'-direction to yield nucleoside 5'-phosphates.. Its function is as follows. Bidirectionally degrades single-stranded DNA into large acid-insoluble oligonucleotides, which are then degraded further into small acid-soluble oligonucleotides. In Rickettsia akari (strain Hartford), this protein is Exodeoxyribonuclease 7 small subunit.